The following is a 140-amino-acid chain: ATP synthase epsilon chain (140 aa).

This sequence belongs to the ATPase epsilon chain family. F-type ATPases have 2 components, CF(1) - the catalytic core - and CF(0) - the membrane proton channel. CF(1) has five subunits: alpha(3), beta(3), gamma(1), delta(1), epsilon(1). CF(0) has three main subunits: a, b and c.

The protein localises to the cell inner membrane. Produces ATP from ADP in the presence of a proton gradient across the membrane. The sequence is that of ATP synthase epsilon chain from Neisseria meningitidis serogroup C / serotype 2a (strain ATCC 700532 / DSM 15464 / FAM18).